The sequence spans 354 residues: Dihydroorotate dehydrogenase (quinone) (354 aa).

FMN is bound by residues 70 to 74 (AGFDK) and T94. Residue K74 coordinates substrate. 119 to 123 (NAMGF) lines the substrate pocket. FMN contacts are provided by N148 and N181. A substrate-binding site is contributed by N181. S184 (nucleophile) is an active-site residue. A substrate-binding site is contributed by N186. FMN is bound by residues K217 and T245. Substrate is bound at residue 246–247 (NT). Residues G265, G294, and 315 to 316 (YS) contribute to the FMN site.

It belongs to the dihydroorotate dehydrogenase family. Type 2 subfamily. In terms of assembly, monomer. Requires FMN as cofactor.

The protein resides in the cell membrane. The enzyme catalyses (S)-dihydroorotate + a quinone = orotate + a quinol. Its pathway is pyrimidine metabolism; UMP biosynthesis via de novo pathway; orotate from (S)-dihydroorotate (quinone route): step 1/1. In terms of biological role, catalyzes the conversion of dihydroorotate to orotate with quinone as electron acceptor. The protein is Dihydroorotate dehydrogenase (quinone) of Sulfurovum sp. (strain NBC37-1).